Consider the following 1353-residue polypeptide: Adenylate cyclase type 9 (1353 aa).

2 disordered regions span residues 1–27 (MASS…DSNS) and 51–73 (SSSC…GGRL). Topologically, residues 1-117 (MASSPHQQLL…CFPQTQRRFR (117 aa)) are cytoplasmic. Positions 16 to 27 (EVSCDSSGDSNS) are enriched in polar residues. Residues 51–66 (SSSCSSSGDSGGLPRR) are compositionally biased toward low complexity. Residues 118–138 (YALFYVGFACLLWSIYFAVHM) traverse the membrane as a helical segment. Over 139 to 141 (KSK) the chain is Extracellular. Residues 142 to 162 (VIVMVVPALCFLVVCVGFFLF) form a helical membrane-spanning segment. The Cytoplasmic portion of the chain corresponds to 163-171 (TFTKLYARH). Residues 172–192 (YAWTSLALTLLVFALTLAAQF) traverse the membrane as a helical segment. Topologically, residues 193–215 (QVWTPLSGRVDSSNHTLTATPAD) are extracellular. N206 carries N-linked (GlcNAc...) asparagine glycosylation. A helical transmembrane segment spans residues 216-235 (TCLSQVGSFSICIEVLLLLY). Topologically, residues 236-241 (TVMQLP) are cytoplasmic. Residues 242 to 259 (LYLSLFLGVVYSVLFETF) form a helical membrane-spanning segment. Over 260–280 (GYHFRNEDCYPSPGPGALHWE) the chain is Extracellular. A helical transmembrane segment spans residues 281 to 301 (LLSRALLHVCIHAIGIHLFVM). The Cytoplasmic segment spans residues 302 to 786 (SQVRSRSTFL…VKTFASATFS (485 aa)). Residues 349 to 375 (QGDEESENSVKRHATSSPKNRKKKSSI) form a disordered region. A compositionally biased stretch (basic residues) spans 359-374 (KRHATSSPKNRKKKSS). D399, I400, and D443 together coordinate Mg(2+). ATP contacts are provided by residues 399–404 (DIVGFT), 441–443 (LGD), and R487. Disordered stretches follow at residues 596-615 (DSRE…GSVS) and 641-685 (SEAG…EEKL). 2 positions are modified to phosphoserine: S610 and S613. Polar residues predominate over residues 661–676 (STKASGGPNSKTQNGL). Residues S688, S691, and S706 each carry the phosphoserine modification. The chain crosses the membrane as a helical span at residues 787 to 807 (SLLDVFLSTTVFLILSITCFL). Over 808 to 818 (KYGATATPPPP) the chain is Extracellular. A helical transmembrane segment spans residues 819-839 (AALAVFGADLLLEVLSLIVSI). Residues 840–867 (RMVFFLEDVMTCTKWLLEWIAGWLPRHC) are Cytoplasmic-facing. The chain crosses the membrane as a helical span at residues 868 to 888 (IGAILVSLPALAVYSHITSEF). Residues 889–891 (ETN) are Extracellular-facing. A helical transmembrane segment spans residues 892–912 (IHVTMFTGSAVLVAVVHYCNF). The Cytoplasmic portion of the chain corresponds to 913–920 (CQLSSWMR). The chain crosses the membrane as a helical span at residues 921–941 (SSLATIVGAGLLLLLHISLCQ). Over 942–975 (DSSIVMSPLDSAQNFSAQRNPCNSSVLQDGRRPA) the chain is Extracellular. N955 and N964 each carry an N-linked (GlcNAc...) asparagine glycan. The chain crosses the membrane as a helical span at residues 976–996 (SLIGKELILTFFLLLLLVWFL). At 997–1353 (NREFEVSYRL…LSKLNVSKSV (357 aa)) the chain is on the cytoplasmic side. ATP contacts are provided by residues K1108, 1185–1187 (DIW), 1192–1196 (NIASR), and K1232. Phosphoserine occurs at positions 1257, 1259, 1295, 1307, and 1332. The segment at 1290 to 1314 (KASLGSDDSTQAKEARLSSKRSWRE) is disordered. Residues 1299 to 1314 (TQAKEARLSSKRSWRE) show a composition bias toward basic and acidic residues.

Belongs to the adenylyl cyclase class-4/guanylyl cyclase family. It depends on Mg(2+) as a cofactor. Requires Mn(2+) as cofactor. Detected in brain, spleen, lung, liver and testis (at protein level). Detected in brain, especially in hippocampus, cerebellum and neocortex. Found in decreasing order in skeletal muscle, heart, adrenal gland, ovary and brain; and to a lesser extent, in kidney, liver, testis, lung, thymus and spleen.

It is found in the cell membrane. The catalysed reaction is ATP = 3',5'-cyclic AMP + diphosphate. Its activity is regulated as follows. Insensitive to calcium/calmodulin, forskolin and somatostatin. Stimulated by beta-adrenergic receptor activation. Activity is down-regulated by calcium/calcineurin. Its function is as follows. Adenylyl cyclase that catalyzes the formation of the signaling molecule cAMP in response to activation of G protein-coupled receptors. Contributes to signaling cascades activated by CRH (corticotropin-releasing factor), corticosteroids and by beta-adrenergic receptors. The protein is Adenylate cyclase type 9 (Adcy9) of Mus musculus (Mouse).